The sequence spans 360 residues: Probable dual-specificity RNA methyltransferase RlmN (360 aa).

The active-site Proton acceptor is the E91. The Radical SAM core domain occupies 97–335 (QHYGQSVCVT…CVVRQEHGTD (239 aa)). The cysteines at positions 104 and 340 are disulfide-linked. Positions 111, 115, and 118 each coordinate [4Fe-4S] cluster. Residues 163 to 164 (GE), S195, 218 to 220 (SLH), and N296 contribute to the S-adenosyl-L-methionine site. Catalysis depends on C340, which acts as the S-methylcysteine intermediate.

Belongs to the radical SAM superfamily. RlmN family. It depends on [4Fe-4S] cluster as a cofactor.

It is found in the cytoplasm. It carries out the reaction adenosine(2503) in 23S rRNA + 2 reduced [2Fe-2S]-[ferredoxin] + 2 S-adenosyl-L-methionine = 2-methyladenosine(2503) in 23S rRNA + 5'-deoxyadenosine + L-methionine + 2 oxidized [2Fe-2S]-[ferredoxin] + S-adenosyl-L-homocysteine. The catalysed reaction is adenosine(37) in tRNA + 2 reduced [2Fe-2S]-[ferredoxin] + 2 S-adenosyl-L-methionine = 2-methyladenosine(37) in tRNA + 5'-deoxyadenosine + L-methionine + 2 oxidized [2Fe-2S]-[ferredoxin] + S-adenosyl-L-homocysteine. In terms of biological role, specifically methylates position 2 of adenine 2503 in 23S rRNA and position 2 of adenine 37 in tRNAs. In Streptococcus equi subsp. zooepidemicus (strain H70), this protein is Probable dual-specificity RNA methyltransferase RlmN.